The chain runs to 312 residues: Olfactory receptor 867 (312 aa).

At Met-1–Asn-6 the chain is on the extracellular side. A helical transmembrane segment spans residues Pro-7–Val-30. Residues Ser-31–Asn-38 are Cytoplasmic-facing. Residues Leu-39 to Pro-60 form a helical membrane-spanning segment. The Extracellular portion of the chain corresponds to Lys-61–Gln-81. The cysteines at positions 78 and 160 are disulfide-linked. Residues Val-82 to Cys-101 form a helical membrane-spanning segment. The Cytoplasmic portion of the chain corresponds to Asp-102–Gln-120. Residues Leu-121–Ile-139 form a helical membrane-spanning segment. The Extracellular segment spans residues His-140–Asn-177. Residue Asn-148 is glycosylated (N-linked (GlcNAc...) asparagine). A helical transmembrane segment spans residues Val-178–Ser-200. The Cytoplasmic segment spans residues Gln-201–Lys-217. Residues Ala-218 to Phe-241 traverse the membrane as a helical segment. Over Cys-242–Met-253 the chain is Extracellular. Residues Ile-254 to Leu-273 form a helical membrane-spanning segment. At Arg-274–Leu-312 the chain is on the cytoplasmic side.

It belongs to the G-protein coupled receptor 1 family. In terms of tissue distribution, epithelium of the tongue; including the taste buds.

It localises to the cell membrane. In terms of biological role, possible olfactory or taste receptor. The chain is Olfactory receptor 867 (Olr867) from Rattus norvegicus (Rat).